We begin with the raw amino-acid sequence, 140 residues long: Small ribosomal subunit protein uS12 (140 aa).

The disordered stretch occupies residues 33–55; sequence KEQTNVSSPQKRGVCTRVGTMTP. Asp-102 bears the 3-methylthioaspartic acid mark.

This sequence belongs to the universal ribosomal protein uS12 family. Part of the 30S ribosomal subunit. Contacts proteins S8 and S17. May interact with IF1 in the 30S initiation complex.

Functionally, with S4 and S5 plays an important role in translational accuracy. Its function is as follows. Interacts with and stabilizes bases of the 16S rRNA that are involved in tRNA selection in the A site and with the mRNA backbone. Located at the interface of the 30S and 50S subunits, it traverses the body of the 30S subunit contacting proteins on the other side and probably holding the rRNA structure together. The combined cluster of proteins S8, S12 and S17 appears to hold together the shoulder and platform of the 30S subunit. This is Small ribosomal subunit protein uS12 from Geobacillus thermodenitrificans (strain NG80-2).